The chain runs to 733 residues: Polyribonucleotide nucleotidyltransferase (733 aa).

Asp489 and Asp495 together coordinate Mg(2+). Positions 556–615 constitute a KH domain; sequence PKIDTIKIDVDKIKIVIGKGGETIDKIIAETGVKIDIDEEGNVSIYSSDQDAINRAKEII. In terms of domain architecture, S1 motif spans 625–693; the sequence is DEVYHAKVVR…AKGRVDASMK (69 aa). The tract at residues 691 to 733 is disordered; sequence SMKVLLPRPPKSDKPKHHHDKGHHPHKEYKGHKDHQESPKTEE. The span at 704–723 shows a compositional bias: basic residues; the sequence is KPKHHHDKGHHPHKEYKGHK. A compositionally biased stretch (basic and acidic residues) spans 724–733; it reads DHQESPKTEE.

The protein belongs to the polyribonucleotide nucleotidyltransferase family. It depends on Mg(2+) as a cofactor.

It localises to the cytoplasm. The enzyme catalyses RNA(n+1) + phosphate = RNA(n) + a ribonucleoside 5'-diphosphate. Its function is as follows. Involved in mRNA degradation. Catalyzes the phosphorolysis of single-stranded polyribonucleotides processively in the 3'- to 5'-direction. The chain is Polyribonucleotide nucleotidyltransferase from Streptococcus sanguinis (strain SK36).